The following is a 441-amino-acid chain: ACT domain-containing protein ACR8 (441 aa).

4 ACT domains span residues 34–110 (IVKV…NIEV), 115–196 (ALEL…SAAK), 248–324 (VVNV…ALEG), and 326–405 (RLEL…TMYH).

As to expression, expressed in roots, leaves, flowers and siliques.

In terms of biological role, may bind amino acids. This Arabidopsis thaliana (Mouse-ear cress) protein is ACT domain-containing protein ACR8.